Consider the following 388-residue polypeptide: Sporulation-specific mitogen-activated protein kinase SMK1 (388 aa).

A Protein kinase domain is found at 38–337 (YEIIQFLGKG…VEQAISHPFL (300 aa)). ATP contacts are provided by residues 44–52 (LGKGAYGTV) and K69. D166 functions as the Proton acceptor in the catalytic mechanism. A TXY motif is present at residues 207–209 (TNY).

Belongs to the protein kinase superfamily. CMGC Ser/Thr protein kinase family. MAP kinase subfamily. Interacts with GSC2. Mg(2+) serves as cofactor. Dually phosphorylated on Thr-207 and Tyr-209, which activates the enzyme.

It catalyses the reaction L-seryl-[protein] + ATP = O-phospho-L-seryl-[protein] + ADP + H(+). The catalysed reaction is L-threonyl-[protein] + ATP = O-phospho-L-threonyl-[protein] + ADP + H(+). With respect to regulation, activated by tyrosine and threonine phosphorylation. Functionally, required for spore wall assembly. Required for proper deposition of the two outer layers of the spore wall, the chitosan and dityrosine layers. Negatively regulates GSC2, an alternate catalytic subunit of the 1,3-beta-glucan synthase (GS). Participates in a developmentally regulated signal transduction pathway that coordinates cytodifferentiation events with the transcriptional program. The protein is Sporulation-specific mitogen-activated protein kinase SMK1 (SMK1) of Saccharomyces cerevisiae (strain ATCC 204508 / S288c) (Baker's yeast).